Here is a 137-residue protein sequence, read N- to C-terminus: S-protein homolog 16 (137 aa).

An N-terminal signal peptide occupies residues 1 to 21 (MKNLLVFIFVFSLCMFDHVSG). N-linked (GlcNAc...) asparagine glycosylation is present at Asn-87.

It belongs to the plant self-incompatibility (S1) protein family.

The protein resides in the secreted. The polypeptide is S-protein homolog 16 (Arabidopsis thaliana (Mouse-ear cress)).